The sequence spans 278 residues: MNTFPAPAKLNLFLHVIGRRDDGYHLLQTVFRFIGYSDQLGFDVTNDGVIRHLNLVPGLTDTDDLCVRAAKLLQKRSGKEMLGVGIHLSKNIPLGGGLGGGSSDAATTLIVLNRLWGINWGRERLMALGLELGADVPIFIYGRNAFAEGVGEKLEVINLPPAWYVVLTPPAPISTAAVFASRELTRNTIPIKMAAFSMAQGHNDLELVAMRLQPVIAEWLDWLKGRHGSTKVAMSGSGSCVFAEFPSESAAREVLRQLPDSMSGFIAPGLARHPLSDF.

Residue K9 is part of the active site. 93–103 (PLGGGLGGGSS) provides a ligand contact to ATP. Residue D135 is part of the active site.

The protein belongs to the GHMP kinase family. IspE subfamily.

It catalyses the reaction 4-CDP-2-C-methyl-D-erythritol + ATP = 4-CDP-2-C-methyl-D-erythritol 2-phosphate + ADP + H(+). Its pathway is isoprenoid biosynthesis; isopentenyl diphosphate biosynthesis via DXP pathway; isopentenyl diphosphate from 1-deoxy-D-xylulose 5-phosphate: step 3/6. Its function is as follows. Catalyzes the phosphorylation of the position 2 hydroxy group of 4-diphosphocytidyl-2C-methyl-D-erythritol. The sequence is that of 4-diphosphocytidyl-2-C-methyl-D-erythritol kinase from Nitrosomonas eutropha (strain DSM 101675 / C91 / Nm57).